We begin with the raw amino-acid sequence, 206 residues long: Glycerol-3-phosphate acyltransferase (206 aa).

Helical transmembrane passes span 3-23, 51-71, 83-103, 113-133, and 162-182; these read LGWL…SYII, VGPA…AVVV, FAAA…YYGF, IGVL…IAIG, and WFGY…LSMW.

Belongs to the PlsY family. In terms of assembly, probably interacts with PlsX.

It is found in the cell membrane. The catalysed reaction is an acyl phosphate + sn-glycerol 3-phosphate = a 1-acyl-sn-glycero-3-phosphate + phosphate. The protein operates within lipid metabolism; phospholipid metabolism. Its function is as follows. Catalyzes the transfer of an acyl group from acyl-phosphate (acyl-PO(4)) to glycerol-3-phosphate (G3P) to form lysophosphatidic acid (LPA). This enzyme utilizes acyl-phosphate as fatty acyl donor, but not acyl-CoA or acyl-ACP. The chain is Glycerol-3-phosphate acyltransferase from Halalkalibacterium halodurans (strain ATCC BAA-125 / DSM 18197 / FERM 7344 / JCM 9153 / C-125) (Bacillus halodurans).